Here is a 542-residue protein sequence, read N- to C-terminus: MRRSGNGGAAKKKKKRSASAASERRPRADGGMRIVVPLQGVVQGRGGLVLGSLIPCALFYFFQLYIKRNRASPPPPPGSPTAASAAAVSPIHRSLSRGLLAPRAALPAISARGASVRDDDSLYYAGLRRCAADPYHPVTNPSGIIQLGLAENYLSLDLVGRWMEEHAAEAASMAGGEDEDERELSIRGLAAYQPYDGILALKMALAGFMRQIMQGSVSFEPSQVVITSGATPAMEILSFCLADPGNAFLVPSPYYPGWDRDIKWRTGIELIPVPCRSTDNFNISITALEIAYNQAKKRGIKVRGVLISNPNNPTGSFVPKQTLHDLLEFAAEKNIHLISDEVFAGSTYGSGKFVSVAEVVDDLEDFDKGRVHIIYGLSKDLSLAGFRVGVIYSYNESIVTAAAKIARFSSVSTPTQRLLVAMLSDQKFISDYLKVNRERLRKMYHLFVDALDQVGIECYKSSGGFYCWADMSKFIRSYSEKGERKLWDRLLEEAKVNVTPGSSCHCIEPGWFRCCFTTLSEHDIPVLVQRLRTITDSHKPNH.

The disordered stretch occupies residues M1–A28. Residue K379 is modified to N6-(pyridoxal phosphate)lysine.

This sequence belongs to the class-I pyridoxal-phosphate-dependent aminotransferase family. Pyridoxal 5'-phosphate is required as a cofactor. In terms of tissue distribution, expressed in leaves.

It localises to the plastid. The protein resides in the amyloplast membrane. The catalysed reaction is S-adenosyl-L-methionine = 1-aminocyclopropane-1-carboxylate + S-methyl-5'-thioadenosine + H(+). It participates in alkene biosynthesis; ethylene biosynthesis via S-adenosyl-L-methionine; ethylene from S-adenosyl-L-methionine: step 1/2. In terms of biological role, catalyzes the formation of 1-aminocyclopropane-1-carboxylate, a direct precursor of ethylene in higher plants. Required for the regulation of starch grain size in endosperm. This is 1-aminocyclopropane-1-carboxylate synthase 6 from Oryza sativa subsp. japonica (Rice).